Reading from the N-terminus, the 494-residue chain is Nuclear distribution protein PAC1 (494 aa).

Residues 14–46 enclose the LisH domain; that stretch reads QKNELDKSVLRYLNWNYKQTVRHEHAQDYESVR. Positions 90-123 form a coiled coil; that stretch reads NSIVRLQKKIIELEQNTETLVSQIKDLNTQVSEL. WD repeat units lie at residues 153–192, 196–244, 251–292, 295–334, 347–395, 415–454, and 457–492; these read NVESSVTSVKLHPNLPIVFVATDHGKLYAFDLFNYTIPLA, SHTK…CKFQ, GHEH…SLKT, PHSQWVRSIDVLGDYIISGSHDTTLRLTHWPSGNGLSVGT, HFIE…LMAH, GHLSWVRDISIRGQYLFSCADDKSVRCWDLNTGQCLHVWE, and HTGFVNSLDLDVDFDSNVTPRQMMVTGGLDCKSNVF.

The protein belongs to the WD repeat LIS1/nudF family. Self-associates. Interacts with NDL1 and dynein.

The protein resides in the cytoplasm. The protein localises to the cytoskeleton. It is found in the spindle pole. Positively regulates the activity of the minus-end directed microtubule motor protein dynein. Plays a central role in positioning the mitotic spindle at the bud neck during cell division. Targets cytoplasmic dynein to microtubule plus ends, thereby promoting dynein-mediated microtubule sliding along the bud cortex and consequently the movement of the mitotic spindle to the bud neck. The sequence is that of Nuclear distribution protein PAC1 from Saccharomyces cerevisiae (strain JAY291) (Baker's yeast).